We begin with the raw amino-acid sequence, 123 residues long: Large ribosomal subunit protein uL14 (123 aa).

The protein belongs to the universal ribosomal protein uL14 family. Part of the 50S ribosomal subunit. Forms a cluster with proteins L3 and L19. In the 70S ribosome, L14 and L19 interact and together make contacts with the 16S rRNA in bridges B5 and B8.

Binds to 23S rRNA. Forms part of two intersubunit bridges in the 70S ribosome. The chain is Large ribosomal subunit protein uL14 from Tropheryma whipplei (strain TW08/27) (Whipple's bacillus).